Here is a 414-residue protein sequence, read N- to C-terminus: Probable solanesyl-diphosphate synthase 3, chloroplastic (414 aa).

Low complexity predominate over residues 1–23; that stretch reads MAAPSSLASSSHLSRRATAAASP. The disordered stretch occupies residues 1–36; it reads MAAPSSLASSSHLSRRATAAASPSIPPPSPPPPPQR. The N-terminal 72 residues, 1 to 72, are a transit peptide targeting the chloroplast; it reads MAAPSSLASS…KPGVAAVDVP (72 aa). Residues 24–35 are compositionally biased toward pro residues; sequence SIPPPSPPPPPQ. Residues Lys134, Arg137, and His172 each contribute to the isopentenyl diphosphate site. Mg(2+)-binding residues include Asp179 and Asp183. Residue Arg188 participates in an all-trans-polyprenyl diphosphate binding. An isopentenyl diphosphate-binding site is contributed by Arg189. An all-trans-polyprenyl diphosphate-binding residues include Lys265, Thr266, Gln303, and Lys320.

This sequence belongs to the FPP/GGPP synthase family. Homodimer. Mg(2+) serves as cofactor.

The protein resides in the plastid. It localises to the chloroplast. It catalyses the reaction 7 isopentenyl diphosphate + (2E)-geranyl diphosphate = all-trans-nonaprenyl diphosphate + 7 diphosphate. Its function is as follows. Involved in providing solanesyl diphosphate for plastoquinone-9 (PQ-9) formation. The sequence is that of Probable solanesyl-diphosphate synthase 3, chloroplastic from Oryza sativa subsp. japonica (Rice).